The sequence spans 72 residues: Translation initiation factor IF-1 2 (72 aa).

One can recognise an S1-like domain in the interval 1 to 72 (MAKEDVIEMQ…TKGRIVFRTK (72 aa)).

Belongs to the IF-1 family. In terms of assembly, component of the 30S ribosomal translation pre-initiation complex which assembles on the 30S ribosome in the order IF-2 and IF-3, IF-1 and N-formylmethionyl-tRNA(fMet); mRNA recruitment can occur at any time during PIC assembly.

It is found in the cytoplasm. Functionally, one of the essential components for the initiation of protein synthesis. Stabilizes the binding of IF-2 and IF-3 on the 30S subunit to which N-formylmethionyl-tRNA(fMet) subsequently binds. Helps modulate mRNA selection, yielding the 30S pre-initiation complex (PIC). Upon addition of the 50S ribosomal subunit IF-1, IF-2 and IF-3 are released leaving the mature 70S translation initiation complex. The protein is Translation initiation factor IF-1 2 of Azoarcus sp. (strain BH72).